The following is a 673-amino-acid chain: Mechanosensitive ion channel protein 2, chloroplastic (673 aa).

The transit peptide at Met-1–Arg-75 directs the protein to the chloroplast. Helical transmembrane passes span Phe-107–Leu-127, Tyr-152–Cys-172, Leu-193–Ile-213, Ala-240–Ser-260, and Trp-264–Thr-284. A disordered region spans residues Lys-492–Pro-673. Composition is skewed to basic and acidic residues over residues Ala-510–Ser-525, Thr-564–Pro-576, and Gly-617–Gly-642. Ser-571 is subject to Phosphoserine. Over residues Ser-661–Pro-673 the composition is skewed to polar residues.

This sequence belongs to the MscS (TC 1.A.23) family. As to expression, widely expressed.

The protein localises to the plastid. Its subcellular location is the chloroplast membrane. Mechanosensitive channel that opens in response to stretch forces in the membrane lipid bilayer. Controls plastid size, shape, and perhaps division during normal plant development by altering ion flux in response to changes in membrane tension. Acts as a component of the chloroplast division machinery. This Arabidopsis thaliana (Mouse-ear cress) protein is Mechanosensitive ion channel protein 2, chloroplastic (MSL2).